Reading from the N-terminus, the 455-residue chain is MERIERDTLGEISVDATKYWGAQTERSKRNFAIGDNPMPIEIIYAFAQLKKATAKVNAAEGKLAEEKAIAIGQVCDQIIQGELDEHFPLVVWQTGSGTQSNMNVNEVIAHVANLTLGEGQIHPNDDVNMSQSSNDTFPTAMHIAAYGALVTKLLPEITKMEAVLTEKKNKYMHLVKIGRTHLQDATPLTLGQEISGWEACLTNNKNYLETSMKAILPLAIGGTAVGTGLNASRDFGDKVAEELMKQTGYPFTSDSNKYFALTSHSPINFVHGAIRSLASDLMKIANDIRLLASGPRSGIGELEIPANEPGSSIMPGKVNPTQCEAITMVAAQVMGNDVTINVAASQGNFELNVYKPVIIFNFLESIKLLADSMRSFRVHCLEGLTANEKVIETKVNDSLMLVTALNPHIGYEKAAKIAKLAFDENTTLKEAAIKTGFVTEKEFDLWINPLKMTNL.

Substrate contacts are provided by residues Ser96–Thr98, His122–Asp125, Ser132–Asn134, and Thr180. The active-site Proton donor/acceptor is His181. Residue Ser311 is part of the active site. Substrate-binding positions include Ser312 and Lys317–Asn319.

The protein belongs to the class-II fumarase/aspartase family. Fumarase subfamily. In terms of assembly, homotetramer.

The protein resides in the cytoplasm. The catalysed reaction is (S)-malate = fumarate + H2O. Its pathway is carbohydrate metabolism; tricarboxylic acid cycle; (S)-malate from fumarate: step 1/1. Functionally, involved in the TCA cycle. Catalyzes the stereospecific interconversion of fumarate to L-malate. The chain is Fumarate hydratase class II from Listeria monocytogenes serovar 1/2a (strain ATCC BAA-679 / EGD-e).